The primary structure comprises 337 residues: ATP-dependent 6-phosphofructokinase (337 aa).

ATP is bound at residue Gly-11. 21–25 serves as a coordination point for ADP; sequence RAVVR. Residues 72-73 and 102-105 each bind ATP; these read RY and GDGS. Asp-103 contacts Mg(2+). 125–127 contacts substrate; the sequence is TID. The active-site Proton acceptor is Asp-127. Arg-154 provides a ligand contact to ADP. Substrate is bound by residues Arg-162 and 169 to 171; that span reads MGR. ADP is bound by residues 185 to 187 and 214 to 216; these read GAD and KNH. Substrate is bound by residues Glu-223, Arg-245, and 251–254; that span reads HILR.

The protein belongs to the phosphofructokinase type A (PFKA) family. ATP-dependent PFK group I subfamily. Prokaryotic clade 'B1' sub-subfamily. Homotetramer. Mg(2+) is required as a cofactor.

It is found in the cytoplasm. The enzyme catalyses beta-D-fructose 6-phosphate + ATP = beta-D-fructose 1,6-bisphosphate + ADP + H(+). It participates in carbohydrate degradation; glycolysis; D-glyceraldehyde 3-phosphate and glycerone phosphate from D-glucose: step 3/4. Its activity is regulated as follows. Allosterically activated by ADP and other diphosphonucleosides, and allosterically inhibited by phosphoenolpyruvate. In terms of biological role, catalyzes the phosphorylation of D-fructose 6-phosphate to fructose 1,6-bisphosphate by ATP, the first committing step of glycolysis. The protein is ATP-dependent 6-phosphofructokinase of Streptococcus uberis (strain ATCC BAA-854 / 0140J).